A 476-amino-acid chain; its full sequence is Calcium/calmodulin-dependent protein kinase type 1G (476 aa).

The Protein kinase domain occupies 23–277; the sequence is FIFMEVLGSG…CEKALRHPWI (255 aa). Residues 29 to 37 and lysine 52 each bind ATP; that span reads LGSGAFSEV. The Proton acceptor role is filled by aspartate 143. Positions 277–317 are autoinhibitory domain; it reads IDGNTALHRDIYPSVSLQIQKNFAKSKWRQAFNAAAVVHHM. Residues 297–318 form a calmodulin-binding region; that stretch reads KNFAKSKWRQAFNAAAVVHHMR. The segment at 326 to 387 is disordered; the sequence is SPSVRQEVEN…SSRPSAPGGR (62 aa).

This sequence belongs to the protein kinase superfamily. CAMK Ser/Thr protein kinase family. CaMK subfamily. In terms of processing, prenylated on Cys-473.

It is found in the cytoplasm. It localises to the golgi apparatus membrane. The protein localises to the cell membrane. The enzyme catalyses L-seryl-[protein] + ATP = O-phospho-L-seryl-[protein] + ADP + H(+). It carries out the reaction L-threonyl-[protein] + ATP = O-phospho-L-threonyl-[protein] + ADP + H(+). With respect to regulation, activated by Ca(2+)/calmodulin. Binding of calmodulin is thought to result in a conformational change and leads to activation through phosphorylation by CAMKK1. Calcium/calmodulin-dependent protein kinase belonging to a proposed calcium-triggered signaling cascade. In vitro phosphorylates transcription factor CREB1. In Rattus norvegicus (Rat), this protein is Calcium/calmodulin-dependent protein kinase type 1G (Camk1g).